We begin with the raw amino-acid sequence, 498 residues long: Hexokinase-1 (498 aa).

A helical membrane pass occupies residues 4–24 (AAVGAAVVCTAAVCAAAAVLV). The region spanning 35 to 487 (GRVMAILKEL…SGIGAALLAA (453 aa)) is the Hexokinase domain. Residues 90-228 (TGDEHGLFYA…GVDMRVTALV (139 aa)) are hexokinase small subdomain. G104, T105, and N106 together coordinate ADP. The D-glucose site is built by T194, K195, N229, and D230. The interval 229-476 (NDTVGTLAGG…ETIVIEHSND (248 aa)) is hexokinase large subdomain. T253 is a binding site for ADP. Residues N256, E284, and E315 each coordinate D-glucose. ADP is bound at residue G441.

Belongs to the hexokinase family.

It is found in the plastid. It localises to the chloroplast outer membrane. It carries out the reaction a D-hexose + ATP = a D-hexose 6-phosphate + ADP + H(+). It catalyses the reaction D-fructose + ATP = D-fructose 6-phosphate + ADP + H(+). The enzyme catalyses D-glucose + ATP = D-glucose 6-phosphate + ADP + H(+). Its pathway is carbohydrate metabolism; hexose metabolism. It functions in the pathway carbohydrate degradation; glycolysis; D-glyceraldehyde 3-phosphate and glycerone phosphate from D-glucose: step 1/4. Fructose and glucose phosphorylating enzyme. The chain is Hexokinase-1 (HXK1) from Spinacia oleracea (Spinach).